Here is a 410-residue protein sequence, read N- to C-terminus: Class E basic helix-loop-helix protein 41 (410 aa).

A Glycyl lysine isopeptide (Lys-Gly) (interchain with G-Cter in SUMO2) cross-link involves residue Lys-31. One can recognise a bHLH domain in the interval 44-99 (TYKLPHRLIEKKRRDRINECIAQLKDLLPEHLKLTTLGHLEKAVVLELTLKHLKAL). A Glycyl lysine isopeptide (Lys-Gly) (interchain with G-Cter in SUMO2) cross-link involves residue Lys-121. Positions 131–166 (FHSGFQTCAKEVLQYLARFESWTPREPRCAQLVSHL) constitute an Orange domain. Disordered stretches follow at residues 209 to 251 (IQRT…SAAP) and 371 to 410 (EVAPPGSLRPQHAHSRTHLPHAVNPESSQEDATQPAKDAP). Lys-240 is covalently cross-linked (Glycyl lysine isopeptide (Lys-Gly) (interchain with G-Cter in SUMO2)).

In terms of assembly, homodimer. Heterodimer with BHLHE40/DEC1. Interacts with CIART. Interacts with BMAL1 and RXRA. Interacts with NR0B2 and HNF1A. As to expression, highly expressed in the caudate putamen, pineal gland, granular cell layer of the cerebellum, olfactory bulb, piriform cortex, hippocampus and hypothalamic nuclei. Moderately expressed in skeletal muscle, heart. Weakly expressed in lung.

The protein resides in the nucleus. Transcriptional repressor involved in the regulation of the circadian rhythm by negatively regulating the activity of the clock genes and clock-controlled genes. Acts as the negative limb of a novel autoregulatory feedback loop (DEC loop) which differs from the one formed by the PER and CRY transcriptional repressors (PER/CRY loop). Both these loops are interlocked as it represses the expression of PER1 and in turn is repressed by PER1/2 and CRY1/2. Represses the activity of the circadian transcriptional activator: CLOCK-BMAL1 heterodimer by competing for the binding to E-box elements (5'-CACGTG-3') found within the promoters of its target genes. Negatively regulates its own expression and the expression of DBP and BHLHE41/DEC2. Acts as a corepressor of RXR and the RXR-LXR heterodimers and represses the ligand-induced RXRA/B/G, NR1H3/LXRA, NR1H4 and VDR transactivation activity. Inhibits HNF1A-mediated transactivation of CYP1A2, CYP2E1 and CYP3A11. The polypeptide is Class E basic helix-loop-helix protein 41 (Bhlhb3) (Rattus norvegicus (Rat)).